Here is a 582-residue protein sequence, read N- to C-terminus: PCNA-interacting partner (582 aa).

2 stretches are compositionally biased toward polar residues: residues 471 to 487 (GVNSSVGRPTIGTSSGN) and 501 to 510 (KSSSLTGNTS). Residues 471 to 514 (GVNSSVGRPTIGTSSGNVHLGRSEKEKVARKSSSLTGNTSSKRK) are disordered.

This sequence belongs to the PARI family. Interacts with RAD51 and PCNA. Interacts with PARP1. Interacts with TASOR.

It localises to the cytoplasm. The protein resides in the nucleus. In terms of biological role, required to suppress inappropriate homologous recombination, thereby playing a central role DNA repair and in the maintenance of genomic stability. Antagonizes homologous recombination by interfering with the formation of the RAD51-DNA homologous recombination structure. Binds single-strand DNA and poly(A) homopolymers. Positively regulate the poly(ADP-ribosyl)ation activity of PARP1; however such function may be indirect. This chain is PCNA-interacting partner (PARPBP), found in Bos taurus (Bovine).